The chain runs to 279 residues: Proteasome subunit alpha type-1 (279 aa).

Position 103 is a phosphotyrosine (Y103). Positions 235–249 (HVAIAKENDNDTPRN) are enriched in basic and acidic residues. The disordered stretch occupies residues 235–279 (HVAIAKENDNDTPRNDDDDDRPSPPEEPAAGPRDPEVLVATEQRP).

Belongs to the peptidase T1A family. The 26S proteasome consists of a 20S proteasome core and two 19S regulatory subunits. The 20S proteasome core is composed of 28 subunits that are arranged in four stacked rings, resulting in a barrel-shaped structure. The two end rings are each formed by seven alpha subunits, and the two central rings are each formed by seven beta subunits. The catalytic chamber with the active sites is on the inside of the barrel. Interacts with PI31.

The protein resides in the cytoplasm. It localises to the nucleus. Its function is as follows. The proteasome is a multicatalytic proteinase complex which is characterized by its ability to cleave peptides with Arg, Phe, Tyr, Leu, and Glu adjacent to the leaving group at neutral or slightly basic pH. The proteasome has an ATP-dependent proteolytic activity. This chain is Proteasome subunit alpha type-1 (Prosalpha6), found in Drosophila melanogaster (Fruit fly).